Here is a 120-residue protein sequence, read N- to C-terminus: uncharacterized protein (120 aa).

A run of 2 helical transmembrane segments spans residues proline 8–valine 28 and phenylalanine 55–leucine 75.

The protein resides in the membrane. This is an uncharacterized protein from Saccharomyces cerevisiae (strain ATCC 204508 / S288c) (Baker's yeast).